Reading from the N-terminus, the 779-residue chain is Anion/proton exchange transporter GEF1 (779 aa).

Residues 1 to 75 (MPTTYVPINQ…REVIWDRAKT (75 aa)) lie on the Cytoplasmic side of the membrane. The helical transmembrane segment at 76–96 (FITLSSTAIVIGCIAGFLQVF) threads the bilayer. Topologically, residues 97-154 (TETLVNWKTGHCQRNWLLNKSFCCNGVVNEVTSTSNLLLKRQEFECEAQGLWIAWKGH) are lumenal. The helical transmembrane segment at 155-175 (VSPFIIFMLLSVLFALISTLL) threads the bilayer. The Cytoplasmic segment spans residues 176–177 (VK). Residues 178–198 (YVAPMATGSGISEIKVWVSGF) traverse the membrane as a helical segment. The Lumenal portion of the chain corresponds to 199–203 (EYNKE). The helical transmembrane segment at 204-224 (FLGFLTLVIKSVALPLAISSG) threads the bilayer. The Cytoplasmic portion of the chain corresponds to 225 to 264 (LSVGKEGPSVHYATCCGYLLTKWLLRDTLTYSSQYEYITA). The chain crosses the membrane as a helical span at residues 265-285 (ASGAGVAVAFGAPIGGVLFGL). Topologically, residues 286-296 (EEIASANRFNS) are lumenal. Residues 297–319 (STLWKSYYVALVAITTLKYIDPF) traverse the membrane as a helical segment. Residues 320–336 (RNGRVILFNVTYDRDWK) are Cytoplasmic-facing. A helical membrane pass occupies residues 337–357 (VQEIPIFIALGIFGGLYGKYI). The Lumenal segment spans residues 358 to 369 (SKWNINFIHFRK). A helical membrane pass occupies residues 370–390 (MYLSSWPVQEVLFLATLTALI). Topologically, residues 391 to 436 (SYFNEFLKLDMTESMGILFHECVKNDNTSTFSHRLCQLDENTHAFE) are cytoplasmic. Residues 437 to 457 (FLKIFTSLCFATVIRALLVVV) traverse the membrane as a helical segment. The Lumenal segment spans residues 458–465 (SYGARVPA). A helical transmembrane segment spans residues 466-486 (GIFVPSMAVGATFGRAVSLLV). Residues 487–500 (ERFISGPSVITPGA) lie on the Cytoplasmic side of the membrane. Residues 501–523 (YAFLGAAATLSGITNLTLTVVVI) form a helical membrane-spanning segment. Over 524–529 (MFELTG) the chain is Lumenal. The helical transmembrane segment at 530–552 (AFMYIIPLMIVVAITRIILSTSG) threads the bilayer. The Cytoplasmic portion of the chain corresponds to 553-779 (ISGGIADQMI…FTTNRNGNVI (227 aa)). CBS domains lie at 591–659 (MSSK…VNST) and 688–744 (MNES…YREV).

Belongs to the chloride channel (TC 2.A.49) family. As to quaternary structure, homodimer. Interacts with GET3. Proteolytically processed in the secretory pathway by protease KEX2 within the first extracellular loop. However, both the N- and C-terminal products of the cleavage reaction are required for assembly of a functional channel.

It is found in the golgi apparatus membrane. It localises to the endosome membrane. The protein resides in the prevacuolar compartment membrane. Functionally, anion/proton exchange transporter involved in iron and copper cation homeostasis. Involved in intracellular iron metabolism during growth on fermentable and non fermentable carbon sources. Required for proper copper-loading and maturation of multicopper oxidase FET3. Important for adjusting intracellular compartment pH to more alkaline pH under iron limitation. May also transport chloride ions through the plasma membrane. The protein is Anion/proton exchange transporter GEF1 (GEF1) of Saccharomyces cerevisiae (strain ATCC 204508 / S288c) (Baker's yeast).